The primary structure comprises 196 residues: Protein hunchback (196 aa).

2 disordered regions span residues 16–60 (SHHH…NTNL) and 90–196 (AMTP…KYMA). Basic residues predominate over residues 17-30 (HHHHHHHAHHSYHQ). Residues 92–103 (TPSSSNNDQNSP) show a composition bias toward polar residues. Residues 125–144 (PTATTTTTPAAAAPTTTAAT) are compositionally biased toward low complexity. Positions 176 to 196 (AEREKEHDLMSNSSEDMKYMA) are enriched in basic and acidic residues.

It belongs to the hunchback C2H2-type zinc-finger protein family.

The protein resides in the nucleus. In terms of biological role, gap class segmentation protein that controls development of head structures. In Drosophila silvestris (Fruit fly), this protein is Protein hunchback (hb).